A 379-amino-acid chain; its full sequence is tRNA-specific 2-thiouridylase MnmA (379 aa).

ATP is bound by residues 6-13 and L32; that span reads AMSGGVDS. C101 acts as the Nucleophile in catalysis. C101 and C199 are joined by a disulfide. Residue G125 coordinates ATP. The interaction with tRNA stretch occupies residues 148–150; sequence KDQ. C199 acts as the Cysteine persulfide intermediate in catalysis.

This sequence belongs to the MnmA/TRMU family.

It is found in the cytoplasm. It carries out the reaction S-sulfanyl-L-cysteinyl-[protein] + uridine(34) in tRNA + AH2 + ATP = 2-thiouridine(34) in tRNA + L-cysteinyl-[protein] + A + AMP + diphosphate + H(+). Functionally, catalyzes the 2-thiolation of uridine at the wobble position (U34) of tRNA, leading to the formation of s(2)U34. The sequence is that of tRNA-specific 2-thiouridylase MnmA from Paenarthrobacter aurescens (strain TC1).